Reading from the N-terminus, the 343-residue chain is Uroporphyrinogen decarboxylase (343 aa).

Substrate contacts are provided by residues 23 to 27 (RQAGR), Asp-73, Tyr-151, Ser-206, and His-322.

This sequence belongs to the uroporphyrinogen decarboxylase family. Homodimer.

The protein localises to the cytoplasm. The catalysed reaction is uroporphyrinogen III + 4 H(+) = coproporphyrinogen III + 4 CO2. It participates in porphyrin-containing compound metabolism; protoporphyrin-IX biosynthesis; coproporphyrinogen-III from 5-aminolevulinate: step 4/4. In terms of biological role, catalyzes the decarboxylation of four acetate groups of uroporphyrinogen-III to yield coproporphyrinogen-III. The protein is Uroporphyrinogen decarboxylase of Granulibacter bethesdensis (strain ATCC BAA-1260 / CGDNIH1).